We begin with the raw amino-acid sequence, 79 residues long: Sulfur carrier protein TusA (79 aa).

Residue cysteine 15 is the Cysteine persulfide intermediate of the active site.

It belongs to the sulfur carrier protein TusA family. As to quaternary structure, interacts with IscS.

The protein localises to the cytoplasm. The protein operates within tRNA modification. Sulfur carrier protein involved in sulfur trafficking in the cell. Part of a sulfur-relay system required for 2-thiolation during synthesis of 2-thiouridine of the modified wobble base 5-methylaminomethyl-2-thiouridine (mnm(5)s(2)U) in tRNA. Interacts with IscS and stimulates its cysteine desulfurase activity. Accepts an activated sulfur from IscS, which is then transferred to TusD, and thus determines the direction of sulfur flow from IscS to 2-thiouridine formation. Also appears to be involved in sulfur transfer for the biosynthesis of molybdopterin. The chain is Sulfur carrier protein TusA from Buchnera aphidicola subsp. Baizongia pistaciae (strain Bp).